We begin with the raw amino-acid sequence, 5098 residues long: Auxin transport protein BIG (5098 aa).

Ala2 bears the N-acetylalanine mark. 2 helical membrane-spanning segments follow: residues Ala1150–Leu1170 and Leu1458–Leu1478. The span at Ser1539–Ser1549 shows a compositional bias: acidic residues. Residues Ser1539–Glu1562 form a disordered region. Residues Lys1573–Pro1644 form a UBR-type zinc finger. Residues Ser2613–Glu2672 form a ZZ-type zinc finger. Residues Cys2618, Cys2621, Cys2633, Cys2636, Cys2642, Cys2645, His2658, and His2662 each contribute to the Zn(2+) site. Residues Ser2813–Trp2833 traverse the membrane as a helical segment. The tract at residues Glu3149–His3174 is disordered. The span at Val3151–Val3162 shows a compositional bias: polar residues. Residues Cys3464–Cys3504 form an MYND-type; degenerate zinc finger. 2 coiled-coil regions span residues Lys3537–Leu3557 and Leu4313–Glu4333. The tract at residues Pro4569 to Asp5098 is UBR4 E3 catalytic module. Residues Gly4698–Ala4817 form a HemiRING-type zinc finger. Zn(2+) contacts are provided by Cys4701, Cys4704, His4751, and Cys4754. Residues Ser4820–Asp5098 form the UZI domain. Residues Ser4891–Ser4903 show a composition bias toward low complexity. The tract at residues Ser4891–Thr4915 is disordered.

The protein belongs to the UBR4 family. In terms of tissue distribution, constitutively expressed in roots, rosette leaves, inflorescence stems, and flowers. Present in inflorescence meristems, floral meristems and vascular tissues.

It localises to the membrane. Functionally, required for auxin efflux and polar auxin transport (PAT) influencing auxin-mediated developmental responses (e.g. cell elongation, apical dominance, lateral root production, inflorescence architecture, general growth and development). Controls the elongation of the pedicels and stem internodes through auxin action. Involved in the expression modulation of light-regulated genes. Represses CAB1 and CAB3 genes expression in etiolated seedlings. Confers sensitivity to the auxin transport inhibitors N-1-naphthylphthalamic acid (NPA), 2-carboxyphenyl-3-phenylpropane-l,2-dione (CPD), and methyl-2-chloro-9-hydroxyfluorene-9-carboxylate (CFM). Influences the polarized subcellular distribution of the auxin transporter PIN1 in response to auxin transport inhibitors. Plays a role in the regulation of responses to phytohormones such as auxin, cytokinins, ethylene and gibberellic acid (GA), particularly during light-mediated stimuli (e.g. shade ovoidance, etiolation). Required for pericycle cell activation to form lateral root primordia (LRP) in both high and low phosphate P conditions. Necessary for the plant-growth promotion and lateral root development mediated by the fungus Trichoderma virens. The polypeptide is Auxin transport protein BIG (BIG) (Arabidopsis thaliana (Mouse-ear cress)).